A 412-amino-acid chain; its full sequence is Proline-rich protein 30 (412 aa).

2 stretches are compositionally biased toward polar residues: residues 1–15 and 23–39; these read MLPQ…QTSV and GFSQ…QPLS. 3 disordered regions span residues 1–88, 123–174, and 317–412; these read MLPQ…HPYS, PLTP…SNRQ, and RPKE…KSSV. Low complexity-rich tracts occupy residues 50 to 59, 126 to 142, and 334 to 350; these read PFSSTQSRRP, PSFS…PHSP, and QLPA…ADPV. A compositionally biased stretch (polar residues) spans 353 to 372; it reads TPSQTRSFRSAGLQSPNSPR.

This is Proline-rich protein 30 (PRR30) from Homo sapiens (Human).